Consider the following 597-residue polypeptide: Probable bifunctional ADP-ribose hydrolase/ADP-ribosyltransferase (597 aa).

The Macro domain occupies 99 to 299; it reads SRLIKHGDLG…FYSKLLGPSH (201 aa). ADP-D-ribose contacts are provided by Asp118, Ile119, and Asn133. Zn(2+) is bound by residues Cys139, His144, and Cys146. ADP-D-ribose contacts are provided by Cys146, Ile147, Asp148, Ser244, Thr245, Gly246, and Phe248. The Deacetylase sirtuin-type domain occupies 307–597; it reads ENTPQGSLSL…IGRAIPLLLE (291 aa). NAD(+) contacts are provided by residues Ala333, 418 to 421, and Gln438; that span reads SNAD. Residues Cys446, Cys450, Cys485, and Cys488 each coordinate Zn(2+). Val584 serves as a coordination point for NAD(+).

It in the N-terminal section; belongs to the MacroD-type family. Zn-Macro subfamily. The protein in the C-terminal section; belongs to the sirtuin family. Class M subfamily. In terms of assembly, monomer. The cofactor is Zn(2+).

The catalysed reaction is 5-O-(ADP-D-ribosyl)-L-glutamyl-[protein] + H2O = L-glutamyl-[protein] + ADP-D-ribose + H(+). Is probably a bifunctional enzyme with ADP-ribosyltransferase and ADP-ribosylhydrolase activities. In vitro, can act as an ADP-ribosylhydrolase that hydrolyzes ADP-ribosyl-glutamate bonds. It can remove the ADP-ribosyl modification from the human mono-ADP-ribosylated PARP1 E988Q mutant, which is primarily modified on glutamate site with only minor aspartate contribution. It cannot hydrolyze the ADP-ribosyl-arpartate bond in ribosylated S.pyogenes GcvH-L. The protein is Probable bifunctional ADP-ribose hydrolase/ADP-ribosyltransferase of Fusarium oxysporum f. sp. cubense.